Consider the following 481-residue polypeptide: 2-succinylbenzoate--CoA ligase (481 aa).

The protein belongs to the ATP-dependent AMP-binding enzyme family. MenE subfamily.

The enzyme catalyses 2-succinylbenzoate + ATP + CoA = 2-succinylbenzoyl-CoA + AMP + diphosphate. Its pathway is quinol/quinone metabolism; 1,4-dihydroxy-2-naphthoate biosynthesis; 1,4-dihydroxy-2-naphthoate from chorismate: step 5/7. It participates in quinol/quinone metabolism; menaquinone biosynthesis. Functionally, converts 2-succinylbenzoate (OSB) to 2-succinylbenzoyl-CoA (OSB-CoA). The chain is 2-succinylbenzoate--CoA ligase from Bacillus cytotoxicus (strain DSM 22905 / CIP 110041 / 391-98 / NVH 391-98).